A 335-amino-acid chain; its full sequence is Leucine-rich repeat-containing protein 39 (335 aa).

A coiled-coil region spans residues 10-47 (AVNAVKEVWEKRIKKLNEDLKREKEFQHKLVRIWEERV). 9 LRR repeats span residues 84 to 105 (QLQE…IGRF), 107 to 128 (NLIV…IGLL), 130 to 151 (RLQE…LSNC), 153 to 176 (SLEK…SNLL), 177 to 197 (KLTH…AVLN), 200 to 221 (ALEW…IERM), 223 to 244 (NLHT…ISNM), 246 to 267 (NLGT…MEEM), and 269 to 290 (NLRF…PPSE).

Interacts with MYH7 (via C-terminus). Highly expressed in skeletal muscle and heart. Not detected in other tissues tested.

It is found in the cytoplasm. The protein resides in the myofibril. Its subcellular location is the sarcomere. The protein localises to the m line. Component of the sarcomeric M-band which plays a role in myocyte response to biomechanical stress. May regulate expression of other M-band proteins via an SRF-dependent pathway. Important for normal contractile function in heart. The chain is Leucine-rich repeat-containing protein 39 (LRRC39) from Homo sapiens (Human).